Consider the following 584-residue polypeptide: Protein disulfide-isomerase-like protein of the testis (584 aa).

The N-terminal stretch at 1 to 20 is a signal peptide; sequence MDLLWMPLLLVAACVSAVHS. Residues Asn-58, Asn-128, Asn-160, and Asn-340 are each glycosylated (N-linked (GlcNAc...) asparagine). The Thioredoxin domain occupies 388–451; the sequence is LVKQLVGKNF…IAKIDVTAND (64 aa). Asn-540 is a glycosylation site (N-linked (GlcNAc...) asparagine). The Prevents secretion from ER motif lies at 581–584; sequence KEEL.

Belongs to the protein disulfide isomerase family. In terms of assembly, homodimer. The homodimer is not disulfide-linked. Interacts with ERO1A and CLGN. N-glycosylated. Testis-specific.

The protein resides in the endoplasmic reticulum. Its function is as follows. Probable redox-inactive chaperone involved in spermatogenesis. The protein is Protein disulfide-isomerase-like protein of the testis (PDILT) of Homo sapiens (Human).